The sequence spans 285 residues: Probable endonuclease 4 (285 aa).

Zn(2+) is bound by residues histidine 69, histidine 109, glutamate 145, aspartate 179, histidine 182, histidine 216, aspartate 229, histidine 231, and glutamate 261.

This sequence belongs to the AP endonuclease 2 family. Requires Zn(2+) as cofactor.

It catalyses the reaction Endonucleolytic cleavage to 5'-phosphooligonucleotide end-products.. Functionally, endonuclease IV plays a role in DNA repair. It cleaves phosphodiester bonds at apurinic or apyrimidinic (AP) sites, generating a 3'-hydroxyl group and a 5'-terminal sugar phosphate. This Escherichia coli O1:K1 / APEC protein is Probable endonuclease 4.